The chain runs to 554 residues: Phenylalanine--tRNA ligase beta subunit (554 aa).

The 78-residue stretch at 274-351 (LTPDSAEITI…INYGYENFNG (78 aa)) folds into the B5 domain. The Mg(2+) site is built by Asp-329, Asp-335, and Asp-339.

The protein belongs to the phenylalanyl-tRNA synthetase beta subunit family. Type 2 subfamily. Tetramer of two alpha and two beta subunits. Requires Mg(2+) as cofactor.

Its subcellular location is the cytoplasm. It catalyses the reaction tRNA(Phe) + L-phenylalanine + ATP = L-phenylalanyl-tRNA(Phe) + AMP + diphosphate + H(+). The chain is Phenylalanine--tRNA ligase beta subunit from Methanococcus aeolicus (strain ATCC BAA-1280 / DSM 17508 / OCM 812 / Nankai-3).